The chain runs to 122 residues: Large ribosomal subunit protein uL14 (122 aa).

It belongs to the universal ribosomal protein uL14 family. Part of the 50S ribosomal subunit. Forms a cluster with proteins L3 and L19. In the 70S ribosome, L14 and L19 interact and together make contacts with the 16S rRNA in bridges B5 and B8.

Binds to 23S rRNA. Forms part of two intersubunit bridges in the 70S ribosome. This Trichormus variabilis (strain ATCC 29413 / PCC 7937) (Anabaena variabilis) protein is Large ribosomal subunit protein uL14.